The chain runs to 173 residues: Alpha-crystallin A chain (173 aa).

The residue at position 1 (Met-1) is an N-acetylmethionine. Positions 1–63 are required for complex formation with BFSP1 and BFSP2; the sequence is MDIAIQHPWF…RTVLDSGISE (63 aa). Residue Gln-6 is modified to Deamidated glutamine; partial. Ser-45 bears the Phosphoserine mark. Deamidated glutamine; partial is present on Gln-50. One can recognise a sHSP domain in the interval 52–162; the sequence is LFRTVLDSGI…GHSERAIPVS (111 aa). The residue at position 70 (Lys-70) is an N6-acetyllysine. Deamidated glutamine; partial is present on Gln-90. Residue Lys-99 is modified to N6-acetyllysine. A Zn(2+)-binding site is contributed by His-100. At Asn-101 the chain carries Deamidated asparagine; partial. Residues Glu-102 and His-107 each coordinate Zn(2+). Ser-122 is modified (phosphoserine). Asn-123 carries the deamidated asparagine; partial modification. The disordered stretch occupies residues 144–173; sequence PKVPSGMDAGHSERAIPVSREEKPSSAPSS. The segment covering 153 to 167 has biased composition (basic and acidic residues); sequence GHSERAIPVSREEKP. Residue His-154 participates in Zn(2+) binding. O-linked (GlcNAc) serine glycosylation occurs at Ser-162.

This sequence belongs to the small heat shock protein (HSP20) family. As to quaternary structure, heteromer composed of three CRYAA and one CRYAB subunits. Inter-subunit bridging via zinc ions enhances stability, which is crucial as there is no protein turn over in the lens. Can also form homodimers and homotetramers (dimers of dimers) which serve as the building blocks of homooligomers. Within homooligomers, the zinc-binding motif is created from residues of 3 different molecules. His-100 and Glu-102 from one molecule are ligands of the zinc ion, and His-107 and His-154 residues from additional molecules complete the site with tetrahedral coordination geometry. Part of a complex required for lens intermediate filament formation composed of BFSP1, BFSP2 and CRYAA. Post-translationally, acetylation at Lys-70 may increase chaperone activity. In terms of processing, undergoes age-dependent proteolytical cleavage at the C-terminus.

The protein resides in the cytoplasm. The protein localises to the nucleus. Its function is as follows. Contributes to the transparency and refractive index of the lens. Acts as a chaperone, preventing aggregation of various proteins under a wide range of stress conditions. Required for the correct formation of lens intermediate filaments as part of a complex composed of BFSP1, BFSP2 and CRYAA. This chain is Alpha-crystallin A chain (CRYAA), found in Balaenoptera acutorostrata (Common minke whale).